A 155-amino-acid chain; its full sequence is Cytochrome c-550 (155 aa).

The first 20 residues, 1–20 (MKISIYATLAAITLALPAAA), serve as a signal peptide directing secretion. Pyrrolidone carboxylic acid is present on Q21. Residues C35, C38, H39, and M120 each contribute to the heme c site. Positions 150-155 (AEGESN) are excised as a propeptide.

Post-translationally, binds 1 heme c group covalently per subunit.

The polypeptide is Cytochrome c-550 (cycA) (Paracoccus denitrificans).